Here is a 290-residue protein sequence, read N- to C-terminus: Pyridoxal kinase PdxY (290 aa).

Substrate-binding positions include Ser12 and 47 to 48; that span reads TQ. ATP-binding positions include Asp114, Glu151, Lys184, and 211 to 214; that span reads RPLL. Residue Asp225 participates in substrate binding.

It belongs to the pyridoxine kinase family. PdxY subfamily. In terms of assembly, homodimer. Requires Mg(2+) as cofactor.

It catalyses the reaction pyridoxal + ATP = pyridoxal 5'-phosphate + ADP + H(+). It functions in the pathway cofactor metabolism; pyridoxal 5'-phosphate salvage; pyridoxal 5'-phosphate from pyridoxal: step 1/1. Its function is as follows. Pyridoxal kinase involved in the salvage pathway of pyridoxal 5'-phosphate (PLP). Catalyzes the phosphorylation of pyridoxal to PLP. This chain is Pyridoxal kinase PdxY, found in Pseudomonas entomophila (strain L48).